Reading from the N-terminus, the 351-residue chain is SLAM family member 6 (351 aa).

Residues 1 to 30 form the signal peptide; it reads MAVSRAPAPDSACQRMVWLFPLVFCLGSGS. Over 31-239 the chain is Extracellular; the sequence is EVSQSSSDPQ…KGVLTNPPWN (209 aa). One can recognise an Ig-like V-type domain in the interval 36-130; sequence SSDPQLMNGV…YTAQITTKDS (95 aa). Residues N82, N101, N112, N152, N159, N172, N186, N193, and N218 are each glycosylated (N-linked (GlcNAc...) asparagine). An Ig-like C2-type domain is found at 147 to 210; sequence NLETTNYTLL…RNSGDQTYVC (64 aa). 2 disulfides stabilise this stretch: C162-C229 and C168-C210. The chain crosses the membrane as a helical span at residues 240–262; sequence AVWFMTTISIISAVILIFVCWSI. The Cytoplasmic portion of the chain corresponds to 263 to 351; the sequence is HVWKRRGSLP…KVNTLINYNS (89 aa). A disordered region spans residues 272–295; the sequence is PLTSQHPESSQSTDGPGSPGNTVY. 2 consecutive short sequence motifs (ITSM) follow at residues 293 to 298 and 317 to 322; these read TVYAQV and TIYSIV. The residue at position 319 (Y319) is a Phosphotyrosine.

In terms of assembly, homodimer. Interacts with PTN6 and, upon phosphorylation, with PTN11 and SH2D1A/SAP. Phosphorylated. Expressed on hematopoietic cells. Isoform 3 is expressed in thymocytes and B lymphocytes of C57Bl/6 strain.

The protein localises to the cell membrane. Functionally, self-ligand receptor of the signaling lymphocytic activation molecule (SLAM) family. SLAM receptors triggered by homo- or heterotypic cell-cell interactions are modulating the activation and differentiation of a wide variety of immune cells and thus are involved in the regulation and interconnection of both innate and adaptive immune response. Activities are controlled by presence or absence of small cytoplasmic adapter proteins, SH2D1A/SAP and/or SH2D1B/EAT-2. Triggers cytolytic activity only in natural killer cells (NK) expressing high surface densities of natural cytotoxicity receptors. Positive signaling in NK cells implicates phosphorylation of VAV1. NK cell activation seems to depend on SH2D1B and not on SH2D1A. In conjunction with SLAMF1 controls the transition between positive selection and the subsequent expansion and differentiation of the thymocytic natural killer T (NKT) cell lineage. Promotes T cell differentiation into a helper T-cell Th17 phenotype leading to increased IL-17 secretion; the costimulatory activity requires SH2D1A. Promotes recruitment of RORC to the IL-17 promoter. In conjunction with SLAMF1 and CD84/SLAMF5 may be a negative regulator of the humoral immune response. In the absence of SH2D1A/SAP can transmit negative signals to CD4(+) T-cells and NKT cells. Negatively regulates germinal center formation by inhibiting T-cell:B-cell adhesion; the function probably implicates increased association with PTPN6/SHP-1 via ITSMs in absence of SH2D1A/SAP. However, reported to mediated T-cell adhesion, to participate in stable T-cell:B-cell interactions and to be involved in maintaining B-cell tolerance in germinal centers and in preventing autoimmunity. Involved in regulation of autoimmunity. Isoform 3 may be suppressor of pathogenic T-cell proliferation. This chain is SLAM family member 6 (Slamf6), found in Mus musculus (Mouse).